The chain runs to 676 residues: Probable potassium transport system protein Kup (676 aa).

12 helical membrane passes run 14–34 (GLLIAIGIVYGDIGTSPLYVM), 56–76 (ISLILWTVTLLTTVQTVIIAL), 97–117 (AAWLVWPALIGGAAILADGTL), 142–162 (VSNQTTVLVITIVILLVLFSI), 173–193 (AFGPIMLVWFAFLGVMGLINI), 219–239 (AGFAILGSIFLATTGAEALYS), 252–272 (SWPFVFVCLSLNYFGQGVWIL), 296–316 (LASIVLATLAAIIASQALITG), 345–365 (IYIPAVNKMLGITTIALVLFF), 376–396 (GLSITISMLTTTILLYEWLVL), 402–422 (LANLLFVIFFSTINILFMGSS), and 429–449 (GGYVSLLITLLIASVMVVWYF).

It belongs to the HAK/KUP transporter (TC 2.A.72) family.

The protein localises to the cell membrane. The catalysed reaction is K(+)(in) + H(+)(in) = K(+)(out) + H(+)(out). Transport of potassium into the cell. Likely operates as a K(+):H(+) symporter. The polypeptide is Probable potassium transport system protein Kup (Lactobacillus delbrueckii subsp. bulgaricus (strain ATCC BAA-365 / Lb-18)).